The primary structure comprises 236 residues: Uridylate kinase (236 aa).

Residue 12-15 participates in ATP binding; it reads KLSG. Residues 20–25 are involved in allosteric activation by GTP; that stretch reads GEKGFG. G54 contacts UMP. ATP-binding residues include G55 and R59. UMP is bound by residues D72 and 133-140; that span reads TGNPYFST. Residues N161, Y166, and D169 each coordinate ATP.

The protein belongs to the UMP kinase family. Homohexamer.

The protein resides in the cytoplasm. It carries out the reaction UMP + ATP = UDP + ADP. The protein operates within pyrimidine metabolism; CTP biosynthesis via de novo pathway; UDP from UMP (UMPK route): step 1/1. Its activity is regulated as follows. Allosterically activated by GTP. Inhibited by UTP. In terms of biological role, catalyzes the reversible phosphorylation of UMP to UDP. In Alkaliphilus metalliredigens (strain QYMF), this protein is Uridylate kinase.